The chain runs to 374 residues: Heat stress transcription factor A-8 (374 aa).

Residues 17 to 112 (VAPFLRKCYD…LLKNVIRRKN (96 aa)) mediate DNA binding. The hydrophobic repeat HR-A/B stretch occupies residues 126–192 (TTYAQEKSGL…EMLSFLVMVM (67 aa)). An AHA1 motif is present at residues 285–294 (DGAWEKLLLL). A Nuclear localization signal motif is present at residues 298–303 (RKKTKK). The AHA2 signature appears at 330–339 (KSYMLKLISE). Positions 363–370 (LTEQMELL) match the Nuclear export signal motif.

Belongs to the HSF family. Class A subfamily. As to quaternary structure, homotrimer. Exhibits temperature-dependent phosphorylation.

Its subcellular location is the cytoplasm. It is found in the nucleus. Its function is as follows. Transcriptional activator that specifically binds DNA sequence 5'-AGAAnnTTCT-3' known as heat shock promoter elements (HSE). The chain is Heat stress transcription factor A-8 (HSFA8) from Arabidopsis thaliana (Mouse-ear cress).